The chain runs to 314 residues: MEFEMYLKNSGIEFLKDHPLKEFTTFKIGGKARYIVFPKSTKQLIEILTLAKDEAINYIVVGNCSNVLVSDKGYNGAIITTVKIDSFKIDGNLIEAECGAMLSHVARKACEAGLKGLEFAVGIPGTVGGAVYMNAGAYDGEIKDVFERAEVLDENLNPVELGRADMRFSYRNSRLKEEKMVLLRAVFCLKFADREDISPLQKANEFSKRRREKQPLSYPSAGSVFKRPPNNFAGKLIEDAGLKGYRIGGACISEKHAGFIINLGDAKAEDVRKLIYLAQKSVYEKFGILLEPEIQFIGEFETPLFVPVDGQNRR.

The 166-residue stretch at 27–192 (KIGGKARYIV…LRAVFCLKFA (166 aa)) folds into the FAD-binding PCMH-type domain. Arginine 171 is a catalytic residue. Residue serine 223 is the Proton donor of the active site. The active site involves glutamate 293.

Belongs to the MurB family. FAD is required as a cofactor.

The protein resides in the cytoplasm. It catalyses the reaction UDP-N-acetyl-alpha-D-muramate + NADP(+) = UDP-N-acetyl-3-O-(1-carboxyvinyl)-alpha-D-glucosamine + NADPH + H(+). It participates in cell wall biogenesis; peptidoglycan biosynthesis. Its function is as follows. Cell wall formation. The chain is UDP-N-acetylenolpyruvoylglucosamine reductase from Caldicellulosiruptor bescii (strain ATCC BAA-1888 / DSM 6725 / KCTC 15123 / Z-1320) (Anaerocellum thermophilum).